A 416-amino-acid chain; its full sequence is Serine hydroxymethyltransferase (416 aa).

Residues Leu121 and 125–127 (GHL) each bind (6S)-5,6,7,8-tetrahydrofolate. Lys230 carries the N6-(pyridoxal phosphate)lysine modification. 354–356 (SPF) lines the (6S)-5,6,7,8-tetrahydrofolate pocket.

Belongs to the SHMT family. As to quaternary structure, homodimer. Requires pyridoxal 5'-phosphate as cofactor.

It is found in the cytoplasm. The enzyme catalyses (6R)-5,10-methylene-5,6,7,8-tetrahydrofolate + glycine + H2O = (6S)-5,6,7,8-tetrahydrofolate + L-serine. It participates in one-carbon metabolism; tetrahydrofolate interconversion. Its pathway is amino-acid biosynthesis; glycine biosynthesis; glycine from L-serine: step 1/1. Catalyzes the reversible interconversion of serine and glycine with tetrahydrofolate (THF) serving as the one-carbon carrier. This reaction serves as the major source of one-carbon groups required for the biosynthesis of purines, thymidylate, methionine, and other important biomolecules. Also exhibits THF-independent aldolase activity toward beta-hydroxyamino acids, producing glycine and aldehydes, via a retro-aldol mechanism. The chain is Serine hydroxymethyltransferase from Prochlorococcus marinus (strain MIT 9211).